The chain runs to 212 residues: Peptide methionine sulfoxide reductase MsrA (212 aa).

C52 is an active-site residue.

This sequence belongs to the MsrA Met sulfoxide reductase family.

The enzyme catalyses L-methionyl-[protein] + [thioredoxin]-disulfide + H2O = L-methionyl-(S)-S-oxide-[protein] + [thioredoxin]-dithiol. It catalyses the reaction [thioredoxin]-disulfide + L-methionine + H2O = L-methionine (S)-S-oxide + [thioredoxin]-dithiol. In terms of biological role, has an important function as a repair enzyme for proteins that have been inactivated by oxidation. Catalyzes the reversible oxidation-reduction of methionine sulfoxide in proteins to methionine. The protein is Peptide methionine sulfoxide reductase MsrA of Salmonella schwarzengrund (strain CVM19633).